The following is a 766-amino-acid chain: DENN domain-containing protein 1B (766 aa).

Residues 14 to 143 (DLVLKVKCHA…YNHPVPKANT (130 aa)) enclose the uDENN domain. Residues 160–296 (GLPTIPESRN…VVSALKNKLK (137 aa)) enclose the cDENN domain. Residues 298–375 (QSTATGDGVA…DGRLAKLNAG (78 aa)) form the dDENN domain. The short motif at 378–382 (FSDIF) is the FXDXF motif element. Positions 472–523 (NEKGENREKHKLSQTHLKRPHKSLDGTLYDDDDDDDDIERASKISSEDGEET) are disordered. Positions 480–492 (KHKLSQTHLKRPH) are enriched in basic residues. The span at 499 to 509 (LYDDDDDDDDI) shows a compositional bias: acidic residues. Tyr500 carries the post-translational modification Phosphotyrosine. Residues Ser516, Ser517, Ser530, and Ser533 each carry the phosphoserine modification. Residues 547–556 (DLLGEILDTL) carry the Clathrin box motif. Disordered regions lie at residues 611–634 (LGQD…VSSG) and 652–732 (LCAD…KPSK). A phosphoserine mark is found at Ser632 and Ser633. Residues 694–704 (TPGQAPLQSED) are compositionally biased toward polar residues. Residues 722-732 (KAGKEDTKPSK) are compositionally biased toward basic and acidic residues.

Interacts with RAB35. Interacts with clathrin heavy chain/CLTC. Interacts with components of the adapter protein complex 2 (AP-2) AP2A2 and AP2B1. Interacts with CD3E. Phosphorylated on serine and/or threonine, possibly regulating the guanine nucleotide exchange factor (GEF) activity. In terms of tissue distribution, expressed in a subset of dendritic cells (DCs).

It is found in the cytoplasm. The protein localises to the cytosol. It localises to the cytoplasmic vesicle. The protein resides in the clathrin-coated vesicle. Its function is as follows. Guanine nucleotide exchange factor (GEF) for RAB35 that acts as a regulator of T-cell receptor (TCR) internalization in TH2 cells. Acts by promoting the exchange of GDP to GTP, converting inactive GDP-bound RAB35 into its active GTP-bound form. Plays a role in clathrin-mediated endocytosis. Controls cytokine production in TH2 lymphocytes by controlling the rate of TCR internalization and routing to endosomes: acts by mediating clathrin-mediated endocytosis of TCR via its interaction with the adapter protein complex 2 (AP-2) and GEF activity. Dysregulation leads to impaired TCR down-modulation and recycling, affecting cytokine production in TH2 cells. The sequence is that of DENN domain-containing protein 1B from Mus musculus (Mouse).